The primary structure comprises 115 residues: Large ribosomal subunit protein bL20c (115 aa).

It belongs to the bacterial ribosomal protein bL20 family.

It localises to the plastid. Its subcellular location is the chloroplast. Binds directly to 23S ribosomal RNA and is necessary for the in vitro assembly process of the 50S ribosomal subunit. It is not involved in the protein synthesizing functions of that subunit. The protein is Large ribosomal subunit protein bL20c of Physcomitrium patens (Spreading-leaved earth moss).